Here is a 505-residue protein sequence, read N- to C-terminus: Pleckstrin homology domain-containing family D member 1 (505 aa).

The PH domain maps to 28-136 (KVQLYGVLWK…WLEMLQESGK (109 aa)). The stretch at 146–391 (EAMIKSLEAQ…KVRNKEKEER (246 aa)) forms a coiled coil. The tract at residues 264–284 (DKNQPQPLTNQSEQPPASDGL) is disordered. The span at 267-278 (QPQPLTNQSEQP) shows a compositional bias: polar residues. Position 502 is an omega-N-methylarginine (Arg502).

This sequence belongs to the PLEKHD1 family.

In Mus musculus (Mouse), this protein is Pleckstrin homology domain-containing family D member 1 (Plekhd1).